Here is a 225-residue protein sequence, read N- to C-terminus: uncharacterized protein (225 aa).

Residues Met1–Val48 form a disordered region. Basic and acidic residues predominate over residues Pro20 to Asp29. One can recognise an HTH merR-type domain in the interval Gly64–His136. Residues Asp201 to Gly225 are disordered. The span at Arg216 to Gly225 shows a compositional bias: basic residues.

This is an uncharacterized protein from Mycobacterium tuberculosis (strain CDC 1551 / Oshkosh).